A 63-amino-acid polypeptide reads, in one-letter code: Cytochrome c oxidase subunit 7C, mitochondrial (63 aa).

Residues 1–16 constitute a mitochondrion transit peptide; the sequence is MLGHSIRRFTTSVVRR. Residues 17-33 lie on the Mitochondrial matrix side of the membrane; sequence SHYEEGPGKNLPFSVKN. N6-acetyllysine; alternate is present on Lys25. An N6-succinyllysine; alternate modification is found at Lys25. A helical membrane pass occupies residues 34-60; sequence KWALLVKMSLYFGSAFATPFLIVRHQL. Residues 61-63 are Mitochondrial intermembrane-facing; sequence LKQ.

The protein belongs to the cytochrome c oxidase VIIc family. As to quaternary structure, component of the cytochrome c oxidase (complex IV, CIV), a multisubunit enzyme composed of 14 subunits. The complex is composed of a catalytic core of 3 subunits MT-CO1, MT-CO2 and MT-CO3, encoded in the mitochondrial DNA, and 11 supernumerary subunits COX4I, COX5A, COX5B, COX6A, COX6B, COX6C, COX7A, COX7B, COX7C, COX8 and NDUFA4, which are encoded in the nuclear genome. The complex exists as a monomer or a dimer and forms supercomplexes (SCs) in the inner mitochondrial membrane with NADH-ubiquinone oxidoreductase (complex I, CI) and ubiquinol-cytochrome c oxidoreductase (cytochrome b-c1 complex, complex III, CIII), resulting in different assemblies (supercomplex SCI(1)III(2)IV(1) and megacomplex MCI(2)III(2)IV(2)). Interacts with RAB5IF.

Its subcellular location is the mitochondrion inner membrane. The protein operates within energy metabolism; oxidative phosphorylation. Component of the cytochrome c oxidase, the last enzyme in the mitochondrial electron transport chain which drives oxidative phosphorylation. The respiratory chain contains 3 multisubunit complexes succinate dehydrogenase (complex II, CII), ubiquinol-cytochrome c oxidoreductase (cytochrome b-c1 complex, complex III, CIII) and cytochrome c oxidase (complex IV, CIV), that cooperate to transfer electrons derived from NADH and succinate to molecular oxygen, creating an electrochemical gradient over the inner membrane that drives transmembrane transport and the ATP synthase. Cytochrome c oxidase is the component of the respiratory chain that catalyzes the reduction of oxygen to water. Electrons originating from reduced cytochrome c in the intermembrane space (IMS) are transferred via the dinuclear copper A center (CU(A)) of subunit 2 and heme A of subunit 1 to the active site in subunit 1, a binuclear center (BNC) formed by heme A3 and copper B (CU(B)). The BNC reduces molecular oxygen to 2 water molecules using 4 electrons from cytochrome c in the IMS and 4 protons from the mitochondrial matrix. In Papio hamadryas (Hamadryas baboon), this protein is Cytochrome c oxidase subunit 7C, mitochondrial (COX7C).